Reading from the N-terminus, the 335-residue chain is MDKLKIIMEKGTERLKRGFAKMVKGGVIMDVTNAEQARIAEEAGAVAVMALHKVPADIRKAGGVARMAPVEKIQEIMDAVTIPVMAKCRIGHEAEARILEALGVDMIDESEVLTPADPFFHIYKKKFTAPFVCGARNLGEAVRRIWEGAAMIRTKGEAGTGNIIEAVRHVRLVNENIRLIQRMTDEEIYGVAEKFAEPYLRLAFSVKEISGLPKRVLENEPIYEGFTYREIVEDIYKILLEIKKLGRLPVVNFAAGGVATPADAALMMAMGMDGVFVGSGIFKSSNPPKMARAIVEAVNHWDEPDVLAEISREIGEPMRGQAIEELQVRMEERGI.

Asp-30 is a D-ribose 5-phosphate binding site. The active-site Schiff-base intermediate with D-ribose 5-phosphate is the Lys-87. Residue Gly-159 coordinates D-ribose 5-phosphate. Arg-171 lines the D-glyceraldehyde 3-phosphate pocket. Residues Gly-257 and 278–279 each bind D-ribose 5-phosphate; that span reads GS.

It belongs to the PdxS/SNZ family. In terms of assembly, homohexamer. In the presence of PdxT, forms a dodecamer of heterodimers.

The catalysed reaction is aldehydo-D-ribose 5-phosphate + D-glyceraldehyde 3-phosphate + L-glutamine = pyridoxal 5'-phosphate + L-glutamate + phosphate + 3 H2O + H(+). Its pathway is cofactor biosynthesis; pyridoxal 5'-phosphate biosynthesis. Catalyzes the formation of pyridoxal 5'-phosphate from ribose 5-phosphate (RBP), glyceraldehyde 3-phosphate (G3P) and ammonia. The ammonia is provided by the PdxT subunit. Can also use ribulose 5-phosphate and dihydroxyacetone phosphate as substrates, resulting from enzyme-catalyzed isomerization of RBP and G3P, respectively. The chain is Pyridoxal 5'-phosphate synthase subunit PdxS from Pyrococcus horikoshii (strain ATCC 700860 / DSM 12428 / JCM 9974 / NBRC 100139 / OT-3).